The sequence spans 182 residues: Prorelaxin (182 aa).

An N-terminal signal peptide occupies residues 1–24 (MPRLFSYLLGVWLLLSQLPREIPG). Pyrrolidone carboxylic acid is present on Q25. 3 cysteine pairs are disulfide-bonded: C34-C169, C46-C182, and C168-C173. The propeptide at 57–154 (SLEEPQLETG…LKNLGLDKHS (98 aa)) is connecting peptide. A propeptide spanning residues 159 to 160 (LF) is cleaved from the precursor.

The protein belongs to the insulin family. In terms of assembly, heterodimer of a B chain and an A chain linked by two disulfide bonds.

The protein resides in the secreted. Relaxin is an ovarian hormone that acts with estrogen to produce dilatation of the birth canal in many mammals. The chain is Prorelaxin (RLN) from Sus scrofa (Pig).